Here is a 445-residue protein sequence, read N- to C-terminus: Chromosome partition protein MukF (445 aa).

Positions 213-241 (LSETSNTLKELQDTLQAAGDELQTQILDI) are leucine-zipper.

This sequence belongs to the MukF family. Interacts, and probably forms a ternary complex, with MukE and MukB via its C-terminal region. The complex formation is stimulated by calcium or magnesium. It is required for an interaction between MukE and MukB.

Its subcellular location is the cytoplasm. It is found in the nucleoid. In terms of biological role, involved in chromosome condensation, segregation and cell cycle progression. May participate in facilitating chromosome segregation by condensation DNA from both sides of a centrally located replisome during cell division. Not required for mini-F plasmid partitioning. Probably acts via its interaction with MukB and MukE. Overexpression results in anucleate cells. It has a calcium binding activity. The chain is Chromosome partition protein MukF from Vibrio vulnificus (strain CMCP6).